Here is a 284-residue protein sequence, read N- to C-terminus: MVLDLLKSGVLLAVLASFTFSVMNALVKEASATLPAAEIVFFRSAIGTLLIYLLMRQAGVALSRQGVPMLLVRGVMGALYLVCYFYAIAHIPLADASILAHMSPFFVILFSALFLGERIPRAVYWLLLVVVLGALMIVKPFSYSSYSVYAVVGLLSAVFAAGASVAIRQLSARHHTYEIVFYFLAVATLVAIPLMWNDFVVPATLREWGLLLAIGVVSLLGQVFLTRAFSHESATIVAVTRYIGIVFNAGWGWLFWSEVPDALTIAGGVLIVVACIALSRTKKG.

The next 10 membrane-spanning stretches (helical) occupy residues 2 to 22 (VLDL…TFSV), 34 to 54 (LPAA…IYLL), 74 to 94 (GVMG…IPLA), 96 to 116 (ASIL…LFLG), 122 to 142 (AVYW…KPFS), 147 to 167 (SVYA…SVAI), 179 to 199 (IVFY…WNDF), 209 to 229 (GLLL…TRAF), 236 to 256 (IVAV…WLFW), and 259 to 279 (VPDA…IALS). EamA domains are found at residues 8 to 138 (SGVL…LMIV) and 151 to 279 (VVGL…IALS).

This sequence belongs to the EamA transporter family.

The protein localises to the cell inner membrane. In terms of biological role, transports the metallophore pseudopaline, which is involved in the acquisition of nickel and zinc, and thus enables bacterial growth inside the host, where metal access is limited. Is probably involved in the export of pseudopaline. Essential for iron acquisition during the interaction with airway mucus secretions (AMS). The polypeptide is Pseudopaline exporter CntI (Pseudomonas aeruginosa (strain ATCC 15692 / DSM 22644 / CIP 104116 / JCM 14847 / LMG 12228 / 1C / PRS 101 / PAO1)).